The primary structure comprises 241 residues: Orotidine 5'-phosphate decarboxylase (241 aa).

Residues D16, K37, 64-73 (DLKFHDIPTT), T128, R190, Q199, G219, and R220 each bind substrate. Catalysis depends on K66, which acts as the Proton donor.

This sequence belongs to the OMP decarboxylase family. Type 1 subfamily. In terms of assembly, homodimer.

It carries out the reaction orotidine 5'-phosphate + H(+) = UMP + CO2. Its pathway is pyrimidine metabolism; UMP biosynthesis via de novo pathway; UMP from orotate: step 2/2. Functionally, catalyzes the decarboxylation of orotidine 5'-monophosphate (OMP) to uridine 5'-monophosphate (UMP). The protein is Orotidine 5'-phosphate decarboxylase of Prochlorococcus marinus (strain NATL2A).